The primary structure comprises 156 residues: Translation initiation factor IF-1, chloroplastic (156 aa).

The segment at Met1–Gln35 is disordered. The transit peptide at Met1–Ser49 directs the protein to the chloroplast. Low complexity predominate over residues Ser10–Pro20. An S1-like domain is found at Gly72 to Arg148.

Belongs to the IF-1 family. As to quaternary structure, component of the 30S ribosomal translation pre-initiation complex which assembles on the 30S ribosome in the order IF-2 and IF-3, IF-1 and N-formylmethionyl-tRNA(fMet); mRNA recruitment can occur at any time during PIC assembly.

It localises to the plastid. The protein localises to the chloroplast. Functionally, one of the essential components for the initiation of protein synthesis. Stabilizes the binding of IF-2 and IF-3 on the 30S subunit to which N-formylmethionyl-tRNA(fMet) subsequently binds. Helps modulate mRNA selection, yielding the 30S pre-initiation complex (PIC). Upon addition of the 50S ribosomal subunit IF-1, IF-2 and IF-3 are released leaving the mature 70S translation initiation complex. In Mesembryanthemum crystallinum (Common ice plant), this protein is Translation initiation factor IF-1, chloroplastic (infA).